The sequence spans 248 residues: DNA repair protein RecO (248 aa).

It belongs to the RecO family.

Its function is as follows. Involved in DNA repair and RecF pathway recombination. This Bradyrhizobium sp. (strain ORS 278) protein is DNA repair protein RecO.